The following is a 213-amino-acid chain: Adenylate kinase (213 aa).

10–15 (GSGKGT) contacts ATP. The segment at 30–59 (SVGDLLRNIISSSSELGKKIKGTVESGNLI) is NMP. AMP contacts are provided by residues Arg36, 57–59 (NLI), 83–86 (GFPR), and Gln90. Positions 125-160 (NRLACLDCKSIYSVSSFKSTTCAKCKSTRLEKRIDD) are LID. Residue Arg126 participates in ATP binding. The Zn(2+) site is built by Cys129 and Cys132. 135–136 (IY) provides a ligand contact to ATP. Zn(2+) is bound by residues Cys146 and Cys149. 2 residues coordinate AMP: Arg157 and Arg169. Residue Leu195 participates in ATP binding.

Belongs to the adenylate kinase family. In terms of assembly, monomer.

The protein localises to the cytoplasm. The enzyme catalyses AMP + ATP = 2 ADP. It functions in the pathway purine metabolism; AMP biosynthesis via salvage pathway; AMP from ADP: step 1/1. Functionally, catalyzes the reversible transfer of the terminal phosphate group between ATP and AMP. Plays an important role in cellular energy homeostasis and in adenine nucleotide metabolism. This chain is Adenylate kinase, found in Wolbachia sp. subsp. Drosophila simulans (strain wRi).